We begin with the raw amino-acid sequence, 289 residues long: Stress response regulator protein 1 (289 aa).

The tract at residues 77–136 (LDCTNSEMDEEDDFEDDEDDENLGLINPLHHKSSHGQISDYSPLTPFTEPPSASLSKPSF) is disordered. Residues 83–98 (EMDEEDDFEDDEDDEN) are compositionally biased toward acidic residues. Positions 127 to 136 (PSASLSKPSF) are enriched in polar residues. Residues 163 to 281 (NFLIVDDNII…YDFVMDRIDE (119 aa)) enclose the Response regulatory domain. The residue at position 214 (Asp214) is a 4-aspartylphosphate.

In terms of biological role, required for stress adaptation, morphogenesis and virulence. This chain is Stress response regulator protein 1 (SRR1), found in Scheffersomyces stipitis (strain ATCC 58785 / CBS 6054 / NBRC 10063 / NRRL Y-11545) (Yeast).